Here is a 126-residue protein sequence, read N- to C-terminus: Non-specific lipid-transfer protein 15 (126 aa).

The first 22 residues, 1–22 (MSKSIFVVCITLLVVLSPTLNA), serve as a signal peptide directing secretion. 4 cysteine pairs are disulfide-bonded: Cys-34/Cys-80, Cys-45/Cys-57, Cys-58/Cys-100, and Cys-78/Cys-114.

Belongs to the plant LTP family.

Functionally, plant non-specific lipid-transfer proteins transfer phospholipids as well as galactolipids across membranes. May play a role in wax or cutin deposition in the cell walls of expanding epidermal cells and certain secretory tissues. The protein is Non-specific lipid-transfer protein 15 (LTP15) of Arabidopsis thaliana (Mouse-ear cress).